A 104-amino-acid chain; its full sequence is MSQSFEGELKTLLRSGKVILGTRKTLKLLKTGKVKGVVVSSTLRQDLKDDIMTFSKFSDIPIYLYKGSGYELGTLCGKPFMVSVIGIVDEGESKILEFIKEVKQ.

It belongs to the eukaryotic ribosomal protein eL30 family.

The chain is Large ribosomal subunit protein eL30 (rpl30e) from Sulfolobus acidocaldarius (strain ATCC 33909 / DSM 639 / JCM 8929 / NBRC 15157 / NCIMB 11770).